The chain runs to 1346 residues: MDQYSLGDEGALPSEMHLPSFSESQGLNCSDTLNRDLGPNTRGFLYAGLSGLDPDPSLPTPDMSSEVLEDNLDTLSLYSGKDSDSVKLLEEYADSESQASLQDLGLGVLKAKEADEGGRATSGSARKGKRQHSSPQNPLLDCSLCGKVFSSASSLSKHYLTHSQERKHVCKICSKAFKRQDHLTGHMLTHQKTKPFVCIEQGCSKSYCDYRSLRRHYEVHHGLCILKEAPPEEEACGDSPHAHESAGQPPPSSLRSLVPPEARSPGSLLPHRDLLRRIVSSIVHQKTPSPGPAPAGASDSEGRNTACPCPASSGSSSCTPAGPHAAPAALDTELPEEPCLPQKEPATDVFTAPNSRAAENGAPDPPEPEPDTALLQARSTAECWPEGGSVPACLPLFRGQTVPASSQPSSHSFQWLRNLPGCPKSKGNNVFVVHKPSAVPSREGSESGPGPSSGSPSEESPPGPGGGLEDALPFPAALLRVPAEAPSDPRSASGEDDPCAPKKVKVDCDSFLCQNPGEPGLQEAQKAGGLPADASPLFRQLFLKSQEPLVSHEQMQVFQMITKSQRIFSHAQVAAVSSQLPAPEGKPAALRPLQGPWPQQPPPLAPAVDSLHAGPGNPEAEGSPARRRKTTPGVPREASPGSTRRDAKGGLKVAAVPTPLAAPSLDPSRNPDISSLAKQLRSSKGTLDLEDIFPSTGQRQTQLGGEEPPGASLPGKQAPAENGAASRITKGEKGPACSRGGGYRLLGNPRAPRFSGFRKEKAKMDMCCAASPSQVAMASFSSAGPPADPSKSKLTIFSRIQGGNIYRLPHPVKEENVAGRGNQQNGSPTDWTKPRSTFVCKNCSQMFYTEKGLSSHMCFHSDQWPSPRGKQEPQVFGTEFCKPLRQVLRPEGDRHSPPGTKKPLDPTAAAPLVVPQSIPVVPVTRHIGSMAMGQEKDGEERDSKESSQQRKRKKRPPPSTAGEPGPAGCHQSRLRSPMFLVDCLLKGLFQCSPYTPPPMLSPIREGSGVYFNTLCSTSTQASPDQLISSMLDQVDGSFGICVVKDDTKISIEPHINIGSRFQAEIPELQERSLAGTDEHVASLVWKPWGDMMISSETQDRVTELCNVACSSVMPGGGTNLELALHCLHEAQGNVQVALETLLLRGPHKPRTHLLADYRYTGSDVWTPIEKRLFKKAFYAHKKDFYLIHKMIQTKTVAQCVEYYYIWKKMIKFDCGRAPGLEKRVKREPEEVERTEEKVPCSPRERPSHHPTPKLKTKSYRRESILSSSPNAGSKRTPELLGSAESQGIFPCRECERVFDKIKSRNAHMKRHRLQDHVEPIIRVKWPVKPFQLKEEELGADIGPLQW.

Disordered regions lie at residues methionine 1–asparagine 34 and glutamate 113–glutamine 136. Positions phenylalanine 21–threonine 32 are enriched in polar residues. C2H2-type zinc fingers lie at residues leucine 140–histidine 162, histidine 168–histidine 190, and phenylalanine 196–histidine 220. Disordered stretches follow at residues alanine 235–histidine 271, valine 283–alanine 328, serine 437–leucine 472, and serine 578–arginine 744. Composition is skewed to low complexity over residues proline 294–proline 323 and proline 440–glutamate 458. The span at proline 671–glycine 685 shows a compositional bias: polar residues. The segment at phenylalanine 838–histidine 860 adopts a C2H2-type 4 zinc-finger fold. Positions alanine 931–glutamine 971 are disordered. Positions glutamine 934–glutamine 948 are enriched in basic and acidic residues. Residues proline 1053–glycine 1145 enclose the ELM2 domain. An SANT domain is found at threonine 1160–lysine 1211. The disordered stretch occupies residues valine 1224–glycine 1281. Residues threonine 1234 to serine 1247 are compositionally biased toward basic and acidic residues. A compositionally biased stretch (basic residues) spans histidine 1248–serine 1258. The span at isoleucine 1264–serine 1273 shows a compositional bias: polar residues. The segment at phenylalanine 1289–histidine 1311 adopts a C2H2-type 5 zinc-finger fold.

As to quaternary structure, interacts with DNTTIP1. Identified in a complex with KCDT19, HDAC1 and HSPA2. Component of a histone deacetylase complex containing DNTTIP1, ZNF541, HDAC1 and HDAC2. Identified in a complex with HDAC1, HDAC2, DNTTIP1 and KCTD19.

It localises to the nucleus. Functionally, transcription regulator which is essential for male fertility and for the completion of meiotic prophase in spermatocytes. Regulates progression of the pachytene stage of meiotic prophase by activating the expression of genes involved in meiosis during spermatogenesis. Maintains the repression of pre-pachytene transcriptional programs, including meiotic double-strand breaks (DSB) formation genes in pachytene spermatocytes and suppresses aberrant DSB formation after mid-pachytene, thus ensuring meiosis progression. The chain is Zinc finger protein 541 (ZNF541) from Homo sapiens (Human).